Consider the following 74-residue polypeptide: Delta-actitoxin-Amc3a (74 aa).

An N-terminal signal peptide occupies residues 1 to 19; the sequence is MNRLIILVVAAVFLGMASA. Positions 20 to 24 are excised as a propeptide; sequence EEDVL. The residue at position 29 (proline 29) is a Hydroxyproline. Cystine bridges form between cysteine 30–cysteine 70, cysteine 32–cysteine 60, and cysteine 53–cysteine 71. At glutamine 73 the chain carries Glutamine amide.

The protein belongs to the sea anemone sodium channel inhibitory toxin family. Type I subfamily.

Its subcellular location is the secreted. The protein resides in the nematocyst. Inhibits voltage-gated sodium channels (Nav). This Antheopsis maculata (Sea anemone) protein is Delta-actitoxin-Amc3a.